Consider the following 957-residue polypeptide: Glycine dehydrogenase (decarboxylating) (957 aa).

Lys708 bears the N6-(pyridoxal phosphate)lysine mark.

Belongs to the GcvP family. The glycine cleavage system is composed of four proteins: P, T, L and H. The cofactor is pyridoxal 5'-phosphate.

The enzyme catalyses N(6)-[(R)-lipoyl]-L-lysyl-[glycine-cleavage complex H protein] + glycine + H(+) = N(6)-[(R)-S(8)-aminomethyldihydrolipoyl]-L-lysyl-[glycine-cleavage complex H protein] + CO2. The glycine cleavage system catalyzes the degradation of glycine. The P protein binds the alpha-amino group of glycine through its pyridoxal phosphate cofactor; CO(2) is released and the remaining methylamine moiety is then transferred to the lipoamide cofactor of the H protein. The sequence is that of Glycine dehydrogenase (decarboxylating) from Salmonella dublin (strain CT_02021853).